The primary structure comprises 362 residues: Bifunctional nitrilase/nitrile hydratase NIT4 (362 aa).

Residues 31–307 (VRATVVQAST…EALITADLDL (277 aa)) form the CN hydrolase domain. Glu-71 functions as the Proton acceptor in the catalytic mechanism. Lys-162 acts as the Proton donor in catalysis. Residue Cys-196 is the Nucleophile of the active site.

It belongs to the carbon-nitrogen hydrolase superfamily. Nitrilase family.

The catalysed reaction is a nitrile + 2 H2O = a carboxylate + NH4(+). It catalyses the reaction 3-cyano-L-alanine + 2 H2O = L-aspartate + NH4(+). Functionally, highly specific for beta-cyano-L-alanine (Ala(CN)). Low activity with 3-phenylpropionitrile (PPN). Not associated with auxin production but may be involved in cyanide detoxification. This Oryza sativa subsp. japonica (Rice) protein is Bifunctional nitrilase/nitrile hydratase NIT4 (NIT4).